A 577-amino-acid chain; its full sequence is Arginine--tRNA ligase (577 aa).

The short motif at 122-132 is the 'HIGH' region element; it reads PNVAKEMHVGH.

This sequence belongs to the class-I aminoacyl-tRNA synthetase family. Monomer.

It localises to the cytoplasm. It carries out the reaction tRNA(Arg) + L-arginine + ATP = L-arginyl-tRNA(Arg) + AMP + diphosphate. The chain is Arginine--tRNA ligase from Escherichia coli O8 (strain IAI1).